The following is a 619-amino-acid chain: Nuclear hormone receptor family member nhr-6 (619 aa).

The segment covering 1–18 (MEQLSIQTDELQDQFSNC) has biased composition (polar residues). 4 disordered regions span residues 1-29 (MEQLSIQTDELQDQFSNCSPASVDSSYSS), 58-86 (MSKNSSCSSSFDYGEFGPSSSSRKGSKTT), 103-134 (QVNTVPKPTKTEVESIPEEFEQKPSSSSHRLP), and 196-232 (QHFPVSDSRRGSQGTTSSSNNTGGTPSPHSSSLPTSP). Over residues 19 to 29 (SPASVDSSYSS) the composition is skewed to low complexity. Residues 125 to 134 (KPSSSSHRLP) are compositionally biased toward polar residues. A compositionally biased stretch (low complexity) spans 206-232 (GSQGTTSSSNNTGGTPSPHSSSLPTSP). A DNA-binding region (nuclear receptor) is located at residues 265-340 (DKMCAVCNDR…VGMVKEIVRH (76 aa)). NR C4-type zinc fingers lie at residues 268–288 (CAVCNDRAVCLHYGARTCEGC) and 304–328 (CAGNKTCPIDKRYRSRCQYCRYQKC). Positions 345–365 (GRRGRLSSKTKLARSEDQPSP) are disordered. Residues 346–356 (RRGRLSSKTKL) are compositionally biased toward basic residues. Residues 365-600 (PPLPLLALMG…STDAPPACGS (236 aa)) form the NR LBD domain. The interval 589-600 (LRSTDAPPACGS) is AF-2.

This sequence belongs to the nuclear hormone receptor family. NR4 subfamily. As to expression, in hermaphrodites, expressed in the developing spermatheca and dorsal uterus. Expression includes the 8 cells of the dorsal somatic gonad primordium and the sujc cells that form the core of the spermatheca-uterine valve. Expressed in the precursor cells of the spermatheca-sheath lineages (SS cells) and in the precursors and descendents of the dorsal-uterine lineage (DU cells). In both hermaphroditic and male animals, expressed in a pair of head chemosensory neurons.

Its subcellular location is the nucleus. Functionally, transcriptional activator that induces gene expression by binding to the NGFI-B response element (NBRE) 5'-AAAGGTCA-3'. Required for proper morphogenesis of the spermatheca and the spermatheca-uterine valve formation. Promotes cell proliferation and differentiation of the spermatheca precursor cells during spermatheca development in larval stage L4. Might play a role in promoting G1/S phase progression in the spermatheca precursor cell lineage. Also required for the differentiation of the spermatheca-uterine junction core (sujc) cells which are generating the spermatheca-uterine valve. In Caenorhabditis elegans, this protein is Nuclear hormone receptor family member nhr-6 (nhr-6).